The following is a 93-amino-acid chain: Putative regulatory protein Cthe_1316 (93 aa).

The segment at 74 to 93 is disordered; the sequence is RLNTKEAEDVEVDDEEEIDE. Over residues 81–93 the composition is skewed to acidic residues; that stretch reads EDVEVDDEEEIDE.

The protein belongs to the RemA family.

The polypeptide is Putative regulatory protein Cthe_1316 (Acetivibrio thermocellus (strain ATCC 27405 / DSM 1237 / JCM 9322 / NBRC 103400 / NCIMB 10682 / NRRL B-4536 / VPI 7372) (Clostridium thermocellum)).